The chain runs to 499 residues: Cobyric acid synthase (499 aa).

Residues 246–441 (PIDIAIIKLP…IHGIFDGAEL (196 aa)) enclose the GATase cobBQ-type domain. Residue Cys-327 is the Nucleophile of the active site. The active site involves His-433.

It belongs to the CobB/CobQ family. CobQ subfamily.

It participates in cofactor biosynthesis; adenosylcobalamin biosynthesis. Its function is as follows. Catalyzes amidations at positions B, D, E, and G on adenosylcobyrinic A,C-diamide. NH(2) groups are provided by glutamine, and one molecule of ATP is hydrogenolyzed for each amidation. The polypeptide is Cobyric acid synthase (Clostridium kluyveri (strain NBRC 12016)).